Reading from the N-terminus, the 576-residue chain is Proline--tRNA ligase (576 aa).

This sequence belongs to the class-II aminoacyl-tRNA synthetase family. ProS type 1 subfamily. Homodimer.

Its subcellular location is the cytoplasm. It carries out the reaction tRNA(Pro) + L-proline + ATP = L-prolyl-tRNA(Pro) + AMP + diphosphate. In terms of biological role, catalyzes the attachment of proline to tRNA(Pro) in a two-step reaction: proline is first activated by ATP to form Pro-AMP and then transferred to the acceptor end of tRNA(Pro). As ProRS can inadvertently accommodate and process non-cognate amino acids such as alanine and cysteine, to avoid such errors it has two additional distinct editing activities against alanine. One activity is designated as 'pretransfer' editing and involves the tRNA(Pro)-independent hydrolysis of activated Ala-AMP. The other activity is designated 'posttransfer' editing and involves deacylation of mischarged Ala-tRNA(Pro). The misacylated Cys-tRNA(Pro) is not edited by ProRS. In Magnetococcus marinus (strain ATCC BAA-1437 / JCM 17883 / MC-1), this protein is Proline--tRNA ligase.